The chain runs to 149 residues: MADQLSNEQISEFKEAFSLFDKDGDGTITTKELGTVMRSLGQNPTEAELQDMINEVDQDGSGTIDFPEFLTLMARKMQDSDSEEEIKEAFRVFDKDGNGFISAAELRHIMTNLGEKLTDEEVDEMIREADVDGDGQINYEEFVKMMMSK.

4 EF-hand domains span residues 8 to 43 (EQIS…LGQN), 44 to 79 (PTEA…KMQD), 81 to 116 (DSEE…LGEK), and 117 to 149 (LTDE…MMSK). Ca(2+) contacts are provided by Asp21, Asp23, Asp25, Thr27, Glu32, Asp57, Asp59, Ser61, Thr63, Glu68, Asp94, Asp96, Asn98, and Glu105. The residue at position 116 (Lys116) is an N6,N6,N6-trimethyllysine. Asp130, Asp132, Asp134, Gln136, and Glu141 together coordinate Ca(2+).

This sequence belongs to the calmodulin family.

Calmodulin mediates the control of a large number of enzymes, ion channels and other proteins by Ca(2+). Among the enzymes to be stimulated by the calmodulin-Ca(2+) complex are a number of protein kinases and phosphatases. The polypeptide is Calmodulin (Trypanosoma brucei brucei).